Here is a 591-residue protein sequence, read N- to C-terminus: Aspartate--tRNA(Asp/Asn) ligase (591 aa).

Glu-176 contacts L-aspartate. The interval 200–203 is aspartate; that stretch reads QLFK. Arg-222 provides a ligand contact to L-aspartate. Residues 222-224 and Gln-231 contribute to the ATP site; that span reads RDE. His-450 is an L-aspartate binding site. Residue Glu-484 participates in ATP binding. Arg-491 provides a ligand contact to L-aspartate. Residue 536–539 participates in ATP binding; that stretch reads GLDR.

The protein belongs to the class-II aminoacyl-tRNA synthetase family. Type 1 subfamily. As to quaternary structure, homodimer.

Its subcellular location is the cytoplasm. The catalysed reaction is tRNA(Asx) + L-aspartate + ATP = L-aspartyl-tRNA(Asx) + AMP + diphosphate. Aspartyl-tRNA synthetase with relaxed tRNA specificity since it is able to aspartylate not only its cognate tRNA(Asp) but also tRNA(Asn). Reaction proceeds in two steps: L-aspartate is first activated by ATP to form Asp-AMP and then transferred to the acceptor end of tRNA(Asp/Asn). This Bacillus anthracis (strain CDC 684 / NRRL 3495) protein is Aspartate--tRNA(Asp/Asn) ligase.